A 460-amino-acid polypeptide reads, in one-letter code: ATP synthase subunit beta (460 aa).

Gly150–Thr157 is an ATP binding site.

It belongs to the ATPase alpha/beta chains family. As to quaternary structure, F-type ATPases have 2 components, CF(1) - the catalytic core - and CF(0) - the membrane proton channel. CF(1) has five subunits: alpha(3), beta(3), gamma(1), delta(1), epsilon(1). CF(0) has three main subunits: a(1), b(2) and c(9-12). The alpha and beta chains form an alternating ring which encloses part of the gamma chain. CF(1) is attached to CF(0) by a central stalk formed by the gamma and epsilon chains, while a peripheral stalk is formed by the delta and b chains.

It is found in the cell inner membrane. It catalyses the reaction ATP + H2O + 4 H(+)(in) = ADP + phosphate + 5 H(+)(out). Its function is as follows. Produces ATP from ADP in the presence of a proton gradient across the membrane. The catalytic sites are hosted primarily by the beta subunits. In Salmonella paratyphi A (strain ATCC 9150 / SARB42), this protein is ATP synthase subunit beta.